Consider the following 203-residue polypeptide: MMQDVSSSPVSPADDSLSNSEEEPDRQQPPSGKRGGRKRRSSSRRSAGGGAGPGGAASGGVGGGDEPGSPAQGKRGKKSAGCGGGGGGGAGGGSSSGGGSPQSYEELQTQRVMANVRERQRTQSLNEAFAALRKIIPTLPSDKLSKIQTLKLAARYIDFLYQVLQSDELDSKMASCSYVAHERLSYAFSVWRMEGAWSMSASH.

The span at 1 to 18 shows a compositional bias: low complexity; that stretch reads MMQDVSSSPVSPADDSLS. The disordered stretch occupies residues 1–106; the sequence is MMQDVSSSPV…GGGSPQSYEE (106 aa). Residues 34 to 43 are compositionally biased toward basic residues; the sequence is RGGRKRRSSS. 2 stretches are compositionally biased toward gly residues: residues 47–66 and 81–100; these read AGGG…GGDE and GCGG…GGGS. The bHLH domain occupies 109–160; it reads TQRVMANVRERQRTQSLNEAFAALRKIIPTLPSDKLSKIQTLKLAARYIDFL. A sufficient for transactivation activity region spans residues 162–192; sequence QVLQSDELDSKMASCSYVAHERLSYAFSVWR.

In terms of assembly, efficient DNA binding requires dimerization with another bHLH protein. Homodimer or heterodimer with E proteins such as TCF3. ID1 binds preferentially to TCF3 but does not interact efficiently with TWIST1 so ID1 levels control the amount of TCF3 available to dimerize with TWIST and thus determine the type of dimer formed.

The protein localises to the nucleus. Its function is as follows. Acts as a transcriptional regulator. Inhibits myogenesis by sequestrating E proteins, inhibiting trans-activation by MEF2, and inhibiting DNA-binding by MYOD1 through physical interaction. This interaction probably involves the basic domains of both proteins. Also represses expression of pro-inflammatory cytokines such as TNFA and IL1B. Regulates cranial suture patterning and fusion. Activates transcription as a heterodimer with E proteins. Regulates gene expression differentially, depending on dimer composition. Homodimers induce expression of FGFR2 and POSTN while heterodimers repress FGFR2 and POSTN expression and induce THBS1 expression. Heterodimerization is also required for osteoblast differentiation. Represses the activity of the circadian transcriptional activator: NPAS2-BMAL1 heterodimer. The polypeptide is Twist-related protein 1 (TWIST1) (Pongo pygmaeus (Bornean orangutan)).